We begin with the raw amino-acid sequence, 911 residues long: Androgen receptor (911 aa).

The modulating stretch occupies residues 1–549 (MEVQLGLGRV…PIDYYFPPQK (549 aa)). Residues 1-578 (MEVQLGLGRV…GSCKVFFKRA (578 aa)) form an interaction with ZNF318 region. Disordered stretches follow at residues 35 to 164 (QNPG…LSLL) and 192 to 225 (QQQQQEAVSEGSSSGRAREASGAPTSSKDNYLGG). The span at 44 to 88 (AASAAPPGASLLLQQQQQQQQQQQQQQQQQQQQQQETSPRQQQQQ) shows a compositional bias: low complexity. Phosphoserine; by CDK9 is present on Ser-81. Ser-93 is subject to Phosphoserine. A compositionally biased stretch (low complexity) spans 192–214 (QQQQQEAVSEGSSSGRAREASGA). The span at 215–225 (PTSSKDNYLGG) shows a compositional bias: polar residues. Tyr-222 bears the Phosphotyrosine; by CSK mark. A Phosphoserine modification is found at Ser-255. Tyr-266 carries the phosphotyrosine; by CSK and TNK2 modification. Phosphotyrosine; by CSK occurs at positions 306, 345, 356, and 361. A Phosphotyrosine; by CSK and TNK2 modification is found at Tyr-362. A Glycyl lysine isopeptide (Lys-Gly) (interchain with G-Cter in SUMO) cross-link involves residue Lys-385. Tyr-392 carries the phosphotyrosine; by CSK modification. A Glycyl lysine isopeptide (Lys-Gly) (interchain with G-Cter in SUMO) cross-link involves residue Lys-512. Phosphotyrosine; by CSK occurs at positions 526 and 543. Residues 543-910 (YYFPPQKTCL…GKVKPIYFHT (368 aa)) form an interaction with LPXN region. 2 consecutive NR C4-type zinc fingers follow at residues 551–571 (CLICGDEASGCHYGALTCGSC) and 587–611 (CASRNDCTIDKFRRKNCPSCRLRKC). Residues 551–623 (CLICGDEASG…AGMTLGARKL (73 aa)) constitute a DNA-binding region (nuclear receptor). The segment at 563-653 (YGALTCGSCK…TEETTQKLTV (91 aa)) is interaction with HIPK3. Residues 583-910 (QKYLCASRND…GKVKPIYFHT (328 aa)) are interaction with CCAR1. The interval 616-910 (MTLGARKLKK…GKVKPIYFHT (295 aa)) is interaction with KAT7. The residue at position 642 (Ser-642) is a Phosphoserine; by STK4/MST1. The region spanning 660–891 (ECQPIFLNVL…DFPEMMAEII (232 aa)) is the NR LBD domain. 17beta-hydroxy-5alpha-androstan-3-one contacts are provided by Asn-697 and Arg-744. Glycyl lysine isopeptide (Lys-Gly) (interchain with G-Cter in ubiquitin) cross-links involve residues Lys-837 and Lys-839. Thr-869 is a 17beta-hydroxy-5alpha-androstan-3-one binding site. At Tyr-907 the chain carries Phosphotyrosine; by CSK.

Belongs to the nuclear hormone receptor family. NR3 subfamily. In terms of assembly, binds DNA as a homodimer. Part of a ternary complex containing AR, EFCAB6/DJBP and PARK7. Interacts with HIPK3 and NR0B2 in the presence of androgen. The ligand binding domain interacts with KAT7/HBO1 in the presence of dihydrotestosterone. Interacts with EFCAB6/DJBP, PQBP1, RANBP9, RBAK, SPDEF, SRA1, TGFB1I1 and RREB1. Interacts with ZMIZ1/ZIMP10 and ZMIZ2/ZMIP7 which both enhance its transactivation activity. Interacts with SLC30A9 and RAD54L2/ARIP4. Interacts with MACROD1 (via macro domain). Interacts via the ligand-binding domain with LXXLL and FXXLF motifs from NCOA1, NCOA2, NCOA3 and MAGEA11. Interacts (via nuclear receptor DNA binding domain and nuclear receptor ligand binding domain) with NCOA4. The AR N-terminal poly-Gln region binds Ran resulting in enhancement of AR-mediated transactivation. Ran-binding decreases as the poly-Gln length increases. Interacts with HIP1 (via coiled coil domain). Interacts (via ligand-binding domain) with TRIM68. Interacts with TNK2. Interacts with USP26. Interacts with RNF6. Interacts (regulated by RNF6 probably through polyubiquitination) with RNF14; regulates AR transcriptional activity. Interacts with PRMT2 and TRIM24. Interacts with RACK1. Interacts with RANBP10; this interaction enhances dihydrotestosterone-induced AR transcriptional activity. Interacts with PRPF6 in a hormone-independent way; this interaction enhances dihydrotestosterone-induced AR transcriptional activity. Interacts with STK4/MST1. Interacts with ZIPK/DAPK3. Interacts with LPXN. Interacts with MAK. Part of a complex containing AR, MAK and NCOA3. Interacts with CRY1. Interacts with CCAR1 and GATA2. Interacts with ZNF318. Interacts with BUD31. Interacts with ARID4A. Interacts with ARID4B. Interacts (via NR LBD domain) with ZBTB7A; the interaction is direct and androgen-dependent. Interacts with NCOR1. Interacts with NCOR2. Interacts with CRY2 in a ligand-dependent manner. Post-translationally, phosphorylated in prostate cancer cells in response to several growth factors including EGF. Phosphorylation is induced by c-Src kinase (CSK). Tyr-526 is one of the major phosphorylation sites and an increase in phosphorylation and Src kinase activity is associated with prostate cancer progression. Phosphorylation by TNK2 enhances the DNA-binding and transcriptional activity. Phosphorylation at Ser-81 by CDK9 regulates AR promoter selectivity and cell growth. Sumoylated on Lys-385 (major) and Lys-512. Ubiquitinated. Deubiquitinated by USP26. 'Lys-6' and 'Lys-27'-linked polyubiquitination by RNF6 modulates AR transcriptional activity and specificity. In terms of processing, palmitoylated by ZDHHC7 and ZDHHC21. Palmitoylation is required for plasma membrane targeting and for rapid intracellular signaling via ERK and AKT kinases and cAMP generation.

The protein resides in the nucleus. It is found in the cytoplasm. In terms of biological role, steroid hormone receptors are ligand-activated transcription factors that regulate eukaryotic gene expression and affect cellular proliferation and differentiation in target tissues. Transcription factor activity is modulated by bound coactivator and corepressor proteins like ZBTB7A that recruits NCOR1 and NCOR2 to the androgen response elements/ARE on target genes, negatively regulating androgen receptor signaling and androgen-induced cell proliferation. Transcription activation is also down-regulated by NR0B2. Activated, but not phosphorylated, by HIPK3 and ZIPK/DAPK3. The protein is Androgen receptor (AR) of Pan troglodytes (Chimpanzee).